Reading from the N-terminus, the 344-residue chain is Protein Tob2 (344 aa).

2 disordered regions span residues 144–169 (GSQDSSLSNSPSPSFGQSPSPTFIPR) and 191–225 (MKKGGGAASGGGVASSGAGGQQPPQQPRMARSPTN). The span at 145–164 (SQDSSLSNSPSPSFGQSPSP) shows a compositional bias: low complexity. The segment covering 194-210 (GGGAASGGGVASSGAGG) has biased composition (gly residues). Residues 211-225 (QQPPQQPRMARSPTN) show a composition bias toward low complexity. Ser254 is subject to Phosphoserine.

This sequence belongs to the BTG family. In terms of assembly, associates with CAF1. In terms of tissue distribution, ubiquitous.

Its subcellular location is the cytoplasm. Functionally, anti-proliferative protein inhibits cell cycle progression from the G0/G1 to S phases. The sequence is that of Protein Tob2 (TOB2) from Homo sapiens (Human).